Consider the following 87-residue polypeptide: Large ribosomal subunit protein bL27 (87 aa).

The segment at 1–21 (MAHKKGGGSTRNGRDSASKRL) is disordered.

It belongs to the bacterial ribosomal protein bL27 family.

This is Large ribosomal subunit protein bL27 from Amoebophilus asiaticus (strain 5a2).